We begin with the raw amino-acid sequence, 458 residues long: UDP-N-acetylmuramate--L-alanine ligase (458 aa).

118 to 124 (GTHGKTT) is an ATP binding site.

This sequence belongs to the MurCDEF family.

It is found in the cytoplasm. The catalysed reaction is UDP-N-acetyl-alpha-D-muramate + L-alanine + ATP = UDP-N-acetyl-alpha-D-muramoyl-L-alanine + ADP + phosphate + H(+). It participates in cell wall biogenesis; peptidoglycan biosynthesis. Its function is as follows. Cell wall formation. The chain is UDP-N-acetylmuramate--L-alanine ligase from Clostridium novyi (strain NT).